Here is a 229-residue protein sequence, read N- to C-terminus: Cytidylate kinase (229 aa).

Residue 12-20 participates in ATP binding; that stretch reads GPSGAGKGT.

This sequence belongs to the cytidylate kinase family. Type 1 subfamily.

It localises to the cytoplasm. It carries out the reaction CMP + ATP = CDP + ADP. The catalysed reaction is dCMP + ATP = dCDP + ADP. This chain is Cytidylate kinase, found in Shewanella frigidimarina (strain NCIMB 400).